Reading from the N-terminus, the 253-residue chain is 3-deoxy-manno-octulosonate cytidylyltransferase (253 aa).

It belongs to the KdsB family.

It is found in the cytoplasm. The enzyme catalyses 3-deoxy-alpha-D-manno-oct-2-ulosonate + CTP = CMP-3-deoxy-beta-D-manno-octulosonate + diphosphate. The protein operates within nucleotide-sugar biosynthesis; CMP-3-deoxy-D-manno-octulosonate biosynthesis; CMP-3-deoxy-D-manno-octulosonate from 3-deoxy-D-manno-octulosonate and CTP: step 1/1. Its pathway is bacterial outer membrane biogenesis; lipopolysaccharide biosynthesis. Activates KDO (a required 8-carbon sugar) for incorporation into bacterial lipopolysaccharide in Gram-negative bacteria. This Neisseria meningitidis serogroup A / serotype 4A (strain DSM 15465 / Z2491) protein is 3-deoxy-manno-octulosonate cytidylyltransferase.